Here is a 186-residue protein sequence, read N- to C-terminus: Agglutinin isolectin 3 (186 aa).

Gln1 bears the Pyrrolidone carboxylic acid mark. 4 Chitin-binding type-1 domains span residues 1-42 (QRCG…ACWT), 43-85 (SKRC…PCRA), 86-128 (DIKC…ACST), and 129-171 (DKPC…GCDG). 16 cysteine pairs are disulfide-bonded: Cys3-Cys18, Cys12-Cys24, Cys17-Cys31, Cys35-Cys40, Cys46-Cys61, Cys55-Cys67, Cys60-Cys74, Cys78-Cys83, Cys89-Cys104, Cys98-Cys110, Cys103-Cys117, Cys121-Cys126, Cys132-Cys147, Cys141-Cys153, Cys146-Cys160, and Cys164-Cys169. A substrate-binding site is contributed by 10–12 (MEC). Residue 62 to 73 (SQYGHCGFGAEY) participates in substrate binding. Substrate is bound at residue 114 to 115 (SE). Residues 172–186 (VFAEAIATNSTLLAE) constitute a propeptide that is removed on maturation. N-linked (GlcNAc...) asparagine glycosylation is present at Asn180.

In terms of assembly, homodimer, u-shaped.

Its function is as follows. N-acetyl-D-glucosamine / N-acetyl-D-neuraminic acid binding lectin. In Triticum aestivum (Wheat), this protein is Agglutinin isolectin 3.